Reading from the N-terminus, the 256-residue chain is Trypsin, alkaline C (256 aa).

The signal sequence occupies residues 1-17; the sequence is MRLFLALLALGFAAVAA. The propeptide at 18–24 is activation peptide; that stretch reads VPANPQR. The 232-residue stretch at 25–256 folds into the Peptidase S1 domain; sequence IVGGSTTTIQ…RYTSWISNNS (232 aa). Cys55 and Cys71 are disulfide-bonded. Catalysis depends on charge relay system residues His70 and Asp115. Cystine bridges form between Cys180/Cys197 and Cys209/Cys233. The Charge relay system role is filled by Ser213.

Belongs to the peptidase S1 family. Midgut.

It localises to the secreted. It is found in the extracellular space. It carries out the reaction Preferential cleavage: Arg-|-Xaa, Lys-|-Xaa.. The sequence is that of Trypsin, alkaline C from Manduca sexta (Tobacco hawkmoth).